The chain runs to 901 residues: Protein translocase subunit SecA (901 aa).

ATP is bound by residues Q87, 105–109, and D512; that span reads GEGKT. The tract at residues 839–901 is disordered; it reads QMEEQRRQES…KYKQCHGRLA (63 aa). Basic and acidic residues predominate over residues 841–850; sequence EEQRRQESER. 4 residues coordinate Zn(2+): C885, C887, C896, and H897. Positions 891–901 are enriched in basic residues; sequence KKYKQCHGRLA.

This sequence belongs to the SecA family. In terms of assembly, monomer and homodimer. Part of the essential Sec protein translocation apparatus which comprises SecA, SecYEG and auxiliary proteins SecDF-YajC and YidC. Requires Zn(2+) as cofactor.

The protein localises to the cell inner membrane. Its subcellular location is the cytoplasm. It catalyses the reaction ATP + H2O + cellular proteinSide 1 = ADP + phosphate + cellular proteinSide 2.. Functionally, part of the Sec protein translocase complex. Interacts with the SecYEG preprotein conducting channel. Has a central role in coupling the hydrolysis of ATP to the transfer of proteins into and across the cell membrane, serving both as a receptor for the preprotein-SecB complex and as an ATP-driven molecular motor driving the stepwise translocation of polypeptide chains across the membrane. This chain is Protein translocase subunit SecA, found in Erwinia tasmaniensis (strain DSM 17950 / CFBP 7177 / CIP 109463 / NCPPB 4357 / Et1/99).